Here is a 64-residue protein sequence, read N- to C-terminus: Cytochrome c oxidase subunit 5C (64 aa).

A helical membrane pass occupies residues 16 to 34 (VVKELVIGFSLGLVAGGFW).

It belongs to the cytochrome c oxidase subunit 5C family. In terms of assembly, sweet potato cytochrome C oxidase consists of at least seven different polypeptides species, subunits I, II, III, IV, Va, Vb, and Vc in order of MW.

It localises to the mitochondrion inner membrane. This protein is one of the nuclear-coded polypeptide chains of cytochrome c oxidase, the terminal oxidase in mitochondrial electron transport. The protein is Cytochrome c oxidase subunit 5C (COX5C) of Ipomoea batatas (Sweet potato).